We begin with the raw amino-acid sequence, 481 residues long: Glutamyl-tRNA(Gln) amidotransferase subunit A (481 aa).

Catalysis depends on charge relay system residues lysine 77 and serine 151. The Acyl-ester intermediate role is filled by serine 175.

The protein belongs to the amidase family. GatA subfamily. In terms of assembly, heterotrimer of A, B and C subunits.

It carries out the reaction L-glutamyl-tRNA(Gln) + L-glutamine + ATP + H2O = L-glutaminyl-tRNA(Gln) + L-glutamate + ADP + phosphate + H(+). Functionally, allows the formation of correctly charged Gln-tRNA(Gln) through the transamidation of misacylated Glu-tRNA(Gln) in organisms which lack glutaminyl-tRNA synthetase. The reaction takes place in the presence of glutamine and ATP through an activated gamma-phospho-Glu-tRNA(Gln). This is Glutamyl-tRNA(Gln) amidotransferase subunit A from Rubrobacter xylanophilus (strain DSM 9941 / JCM 11954 / NBRC 16129 / PRD-1).